Consider the following 195-residue polypeptide: dCTP deaminase (195 aa).

DCTP is bound by residues 110–115 (RSSLAR), aspartate 128, 136–138 (VLE), tyrosine 171, lysine 178, and glutamine 182. Glutamate 138 (proton donor/acceptor) is an active-site residue. The tract at residues 171 to 195 (YSSRKDAKYKNQQSAVASRIDEDKE) is disordered.

It belongs to the dCTP deaminase family. In terms of assembly, homotrimer.

It carries out the reaction dCTP + H2O + H(+) = dUTP + NH4(+). Its pathway is pyrimidine metabolism; dUMP biosynthesis; dUMP from dCTP (dUTP route): step 1/2. Catalyzes the deamination of dCTP to dUTP. In Haemophilus influenzae (strain ATCC 51907 / DSM 11121 / KW20 / Rd), this protein is dCTP deaminase.